The chain runs to 169 residues: Putative lipocalin R877 (169 aa).

An N-terminal signal peptide occupies residues 1 to 18 (MWIIILIVIIVIITIIFS).

The protein belongs to the calycin superfamily. Lipocalin family.

The protein localises to the secreted. It is found in the virion. In terms of biological role, could play a role in the transport of a small ligand. This chain is Putative lipocalin R877, found in Acanthamoeba polyphaga mimivirus (APMV).